Consider the following 265-residue polypeptide: Ribosomal RNA small subunit methyltransferase A (265 aa).

Residues histidine 13, leucine 15, glycine 40, glutamate 61, aspartate 85, and asparagine 103 each contribute to the S-adenosyl-L-methionine site.

It belongs to the class I-like SAM-binding methyltransferase superfamily. rRNA adenine N(6)-methyltransferase family. RsmA subfamily.

It localises to the cytoplasm. It catalyses the reaction adenosine(1518)/adenosine(1519) in 16S rRNA + 4 S-adenosyl-L-methionine = N(6)-dimethyladenosine(1518)/N(6)-dimethyladenosine(1519) in 16S rRNA + 4 S-adenosyl-L-homocysteine + 4 H(+). Specifically dimethylates two adjacent adenosines (A1518 and A1519) in the loop of a conserved hairpin near the 3'-end of 16S rRNA in the 30S particle. May play a critical role in biogenesis of 30S subunits. This chain is Ribosomal RNA small subunit methyltransferase A, found in Bordetella pertussis (strain Tohama I / ATCC BAA-589 / NCTC 13251).